A 112-amino-acid polypeptide reads, in one-letter code: K(+)/H(+) antiporter modulator KhtS (112 aa).

The segment at 42–64 (YVPMSSYPQETQSAKTPSPGSMH) is disordered. The segment covering 47-60 (SYPQETQSAKTPSP) has biased composition (polar residues).

It localises to the cell membrane. In terms of biological role, modulates the activity of the potassium/proton antiporter KhtU. Involved in protection of the cell from methylglyoxal, a toxic by-product of glycolysis. The sequence is that of K(+)/H(+) antiporter modulator KhtS from Bacillus subtilis (strain 168).